The chain runs to 204 residues: Recombination protein RecR (204 aa).

A C4-type zinc finger spans residues C58–C75. The 99-residue stretch at T83–P181 folds into the Toprim domain.

It belongs to the RecR family.

Functionally, may play a role in DNA repair. It seems to be involved in an RecBC-independent recombinational process of DNA repair. It may act with RecF and RecO. This chain is Recombination protein RecR, found in Chlorobium chlorochromatii (strain CaD3).